Reading from the N-terminus, the 193-residue chain is Major structural subunit of bundle-forming pilus (193 aa).

The propeptide occupies 1-13 (MVSKIMNKKYEKG). The residue at position 14 (Leu-14) is an N-methylleucine. Residues 14–35 (LSLIESAMVLALAATVTAGVMF) traverse the membrane as a helical segment. A disulfide bridge links Cys-129 with Cys-179.

Belongs to the N-Me-Phe pilin family. 10 to 100 laterally aligned filaments or bundle-forming pili coalesce into rope-like bundles. These form linkages between the bacteria within the enteropathogenic E.coli (EPEC) microcolonies that are attached to epithelial cells.

The protein resides in the fimbrium. The protein localises to the membrane. Major repeating bundle-forming pilus (BFP) subunit. Is required for EPEC localized adherence. The chain is Major structural subunit of bundle-forming pilus (bfpA) from Escherichia coli O111:H-.